The primary structure comprises 199 residues: Large ribosomal subunit protein uL4 (199 aa).

It belongs to the universal ribosomal protein uL4 family. In terms of assembly, part of the 50S ribosomal subunit.

Functionally, one of the primary rRNA binding proteins, this protein initially binds near the 5'-end of the 23S rRNA. It is important during the early stages of 50S assembly. It makes multiple contacts with different domains of the 23S rRNA in the assembled 50S subunit and ribosome. Forms part of the polypeptide exit tunnel. The polypeptide is Large ribosomal subunit protein uL4 (Aquifex aeolicus (strain VF5)).